Here is a 154-residue protein sequence, read N- to C-terminus: Large ribosomal subunit protein uL30 (154 aa).

Belongs to the universal ribosomal protein uL30 family. Part of the 50S ribosomal subunit.

In Methanocaldococcus jannaschii (strain ATCC 43067 / DSM 2661 / JAL-1 / JCM 10045 / NBRC 100440) (Methanococcus jannaschii), this protein is Large ribosomal subunit protein uL30.